Consider the following 102-residue polypeptide: Small ribosomal subunit protein uS10 (102 aa).

The protein belongs to the universal ribosomal protein uS10 family. In terms of assembly, part of the 30S ribosomal subunit.

In terms of biological role, involved in the binding of tRNA to the ribosomes. This Geobacillus kaustophilus (strain HTA426) protein is Small ribosomal subunit protein uS10.